The following is a 471-amino-acid chain: Glutamate--tRNA ligase (471 aa).

The 'HIGH' region motif lies at 9–19 (PSPTGYLHVGG). 4 residues coordinate Zn(2+): Cys98, Cys100, Cys125, and His127. A 'KMSKS' region motif is present at residues 237-241 (KLSKR). Lys240 serves as a coordination point for ATP.

The protein belongs to the class-I aminoacyl-tRNA synthetase family. Glutamate--tRNA ligase type 1 subfamily. As to quaternary structure, monomer. The cofactor is Zn(2+).

The protein localises to the cytoplasm. It carries out the reaction tRNA(Glu) + L-glutamate + ATP = L-glutamyl-tRNA(Glu) + AMP + diphosphate. Functionally, catalyzes the attachment of glutamate to tRNA(Glu) in a two-step reaction: glutamate is first activated by ATP to form Glu-AMP and then transferred to the acceptor end of tRNA(Glu). This is Glutamate--tRNA ligase from Shigella boydii serotype 18 (strain CDC 3083-94 / BS512).